The primary structure comprises 122 residues: MIQVPSTLNVADNTGVKKLKCIKVLGGSRRRYATLGDVIICSVTDIIPTCSIEKGKVVKAVIVRVKKEVRRPDGSYIRFDENAAVIVDDKKEPRGKRIFGPVARELRDRGFMKIVSLAPEVI.

It belongs to the universal ribosomal protein uL14 family. Part of the 50S ribosomal subunit. Forms a cluster with proteins L3 and L19. In the 70S ribosome, L14 and L19 interact and together make contacts with the 16S rRNA in bridges B5 and B8.

Functionally, binds to 23S rRNA. Forms part of two intersubunit bridges in the 70S ribosome. In Brachyspira hyodysenteriae (strain ATCC 49526 / WA1), this protein is Large ribosomal subunit protein uL14.